The sequence spans 2147 residues: Non-reducing polyketide synthase albA (2147 aa).

Positions 8–244 are N-terminal acylcarrier protein transacylase domain (SAT); that stretch reads YLFGDQTSDI…VKAPIHGPYH (237 aa). Residues 375 to 806 enclose the Ketosynthase family 3 (KS3) domain; sequence CSKIAIIGMS…GGNTAILLED (432 aa). Catalysis depends on for beta-ketoacyl synthase activity residues cysteine 547, histidine 682, and histidine 724. Residues 912-1232 form a malonyl-CoA:ACP transacylase (MAT) domain region; sequence FVFTGQGAQY…LSSLHLAGID (321 aa). Serine 1001 serves as the catalytic For acyl/malonyl transferase activity. Residues 1286-1425 are N-terminal hotdog fold; the sequence is HEFLTTAAQK…CTVRFFDCAA (140 aa). The PKS/mFAS DH domain maps to 1286-1598; sequence HEFLTTAAQK…FQGLSRKILD (313 aa). Residues 1290–1603 form a product template (PT) domain region; that stretch reads TTAAQKVIET…RKILDTVLPP (314 aa). The active-site Proton acceptor; for dehydratase activity is the histidine 1326. Residues 1452 to 1598 are C-terminal hotdog fold; the sequence is DAHRLGRGMV…FQGLSRKILD (147 aa). Aspartate 1511 acts as the Proton donor; for dehydratase activity in catalysis. Positions 1608–1637 are disordered; sequence KGPARPAASAQKAAPAATSKSRASAPAPAK. Low complexity predominate over residues 1610–1637; the sequence is PARPAASAQKAAPAATSKSRASAPAPAK. The region spanning 1642 to 1719 is the Carrier 1 domain; the sequence is PSAPSLVKRA…DFKQFLAPMS (78 aa). O-(pantetheine 4'-phosphoryl)serine is present on serine 1679. Positions 1719–1759 are disordered; the sequence is SQGEASDGSTSDPESSSSFNGGSSTDESSAGSPVSSPPNEK. Positions 1724-1747 are enriched in low complexity; it reads SDGSTSDPESSSSFNGGSSTDESS. The region spanning 1760-1837 is the Carrier 2 domain; it reads IEQHATMKEI…DVEDALGLKP (78 aa). An O-(pantetheine 4'-phosphoryl)serine modification is found at serine 1797. The tract at residues 1873 to 2145 is claisen cyclase domain; it reads SPHPRSTSIL…ELGSFIGNAM (273 aa). The active-site For Claisen cyclase activity is the serine 1963.

It catalyses the reaction 6 malonyl-CoA + acetyl-CoA + 6 H(+) = naphtopyrone YWA1 + 6 CO2 + 7 CoA + H2O. Its pathway is secondary metabolite biosynthesis. Non-reducing polyketide synthase involved in the biosynthesis of bifonsecin B, a dimeric gamma-naphthopyrone. The first step in the biosynthesis of bifonsecin B is the production of gamma-naphthopyrone precursor YWA1 by the non-reducing polyketide synthase albA, via condensation of one acetyl-CoA starter unit with 6 malonyl-CoA units. YWA1 is then methylated by bfoE at position C-6 to yield foncesin which is further methylated at position C-8 by bfoD to produce fonsecin B. A key enzyme in the biosynthetic pathway is the cytochrome P450 monooxygenase bfoB which catalyzes the oxidative dimerization of fonsecin B to bifonsecin B. Bfob also catalyzes the oxidative dimerization of rubrofusarin B into nigerone. The stereoselectivity of bfoB is influenced by the two natural monomeric substrates; homodimerization of fonsecin B yields a stereochemically pure biaryl, M-foncerine B, while rubrofusarin B yields a mixture of enantiomers M- and P-nigerone. The protein is Non-reducing polyketide synthase albA of Aspergillus brasiliensis (strain CBS 101740 / IMI 381727 / IBT 21946).